A 256-amino-acid chain; its full sequence is UPF0246 protein HCH_04801 (256 aa).

This sequence belongs to the UPF0246 family.

The protein is UPF0246 protein HCH_04801 of Hahella chejuensis (strain KCTC 2396).